We begin with the raw amino-acid sequence, 524 residues long: 56 kDa type-specific antigen (524 aa).

The first 22 residues, 1–22 (MKKIMLIASAMSALSLPFSASA), serve as a signal peptide directing secretion. The helical transmembrane segment at 67 to 87 (LTTGLPFGGTLAAGMTIAPGF) threads the bilayer. Disordered stretches follow at residues 112–132 (SKGE…RKRF) and 387–422 (EKLA…KGKE). Basic and acidic residues-rich tracts occupy residues 395-405 (EDAKNQGEGDC) and 413-422 (EKSKEGKGKE). Residues 472–492 (TGMVASGALGVAINAAEGVYV) traverse the membrane as a helical segment.

The protein localises to the cell membrane. Functionally, may be an adherent factor for rickettsial adsorption to the host-cell surface and a determinant of virulence of individual rickettsial strain. It is the major outer membrane protein. In Orientia tsutsugamushi (Rickettsia tsutsugamushi), this protein is 56 kDa type-specific antigen.